A 117-amino-acid polypeptide reads, in one-letter code: Large ribosomal subunit protein bL20c (117 aa).

The protein belongs to the bacterial ribosomal protein bL20 family.

It is found in the plastid. The protein localises to the chloroplast. Functionally, binds directly to 23S ribosomal RNA and is necessary for the in vitro assembly process of the 50S ribosomal subunit. It is not involved in the protein synthesizing functions of that subunit. The sequence is that of Large ribosomal subunit protein bL20c from Acorus gramineus (Dwarf sweet flag).